The primary structure comprises 446 residues: Ubiquitin carboxyl-terminal hydrolase MINDY-3 (446 aa).

The active-site Nucleophile is the Cys-51. A compositionally biased stretch (basic and acidic residues) spans 117–128 (DNSDITDSHPEP). The tract at residues 117–137 (DNSDITDSHPEPESSQPTDTP) is disordered. The active-site Proton acceptor is His-288.

The protein belongs to the MINDY deubiquitinase family. FAM188 subfamily.

It is found in the nucleus. The enzyme catalyses Thiol-dependent hydrolysis of ester, thioester, amide, peptide and isopeptide bonds formed by the C-terminal Gly of ubiquitin (a 76-residue protein attached to proteins as an intracellular targeting signal).. In terms of biological role, hydrolase that can remove 'Lys-48'-linked conjugated ubiquitin from proteins. This is Ubiquitin carboxyl-terminal hydrolase MINDY-3 (mindy3) from Danio rerio (Zebrafish).